The primary structure comprises 275 residues: ATP synthase subunit delta (275 aa).

It belongs to the ATPase delta chain family. F-type ATPases have 2 components, F(1) - the catalytic core - and F(0) - the membrane proton channel. F(1) has five subunits: alpha(3), beta(3), gamma(1), delta(1), epsilon(1). F(0) has three main subunits: a(1), b(2) and c(10-14). The alpha and beta chains form an alternating ring which encloses part of the gamma chain. F(1) is attached to F(0) by a central stalk formed by the gamma and epsilon chains, while a peripheral stalk is formed by the delta and b chains.

Its subcellular location is the cell membrane. Its function is as follows. F(1)F(0) ATP synthase produces ATP from ADP in the presence of a proton or sodium gradient. F-type ATPases consist of two structural domains, F(1) containing the extramembraneous catalytic core and F(0) containing the membrane proton channel, linked together by a central stalk and a peripheral stalk. During catalysis, ATP synthesis in the catalytic domain of F(1) is coupled via a rotary mechanism of the central stalk subunits to proton translocation. This protein is part of the stalk that links CF(0) to CF(1). It either transmits conformational changes from CF(0) to CF(1) or is implicated in proton conduction. The protein is ATP synthase subunit delta of Arthrobacter sp. (strain FB24).